Reading from the N-terminus, the 430-residue chain is Adenylosuccinate synthetase (430 aa).

Residues 13-19 and 41-43 each bind GTP; these read GDEGKGK and GHT. The Proton acceptor role is filled by aspartate 14. Residues aspartate 14 and glycine 41 each contribute to the Mg(2+) site. IMP contacts are provided by residues 14 to 17, 39 to 42, threonine 130, arginine 144, glutamine 225, threonine 240, and arginine 304; these read DEGK and NAGH. The active-site Proton donor is histidine 42. Substrate is bound at residue 300 to 306; it reads ATTGRAR. GTP-binding positions include arginine 306, 332–334, and 414–416; these read KLD and STG.

The protein belongs to the adenylosuccinate synthetase family. In terms of assembly, homodimer. It depends on Mg(2+) as a cofactor.

It is found in the cytoplasm. The catalysed reaction is IMP + L-aspartate + GTP = N(6)-(1,2-dicarboxyethyl)-AMP + GDP + phosphate + 2 H(+). The protein operates within purine metabolism; AMP biosynthesis via de novo pathway; AMP from IMP: step 1/2. In terms of biological role, plays an important role in the de novo pathway of purine nucleotide biosynthesis. Catalyzes the first committed step in the biosynthesis of AMP from IMP. In Pseudomonas aeruginosa (strain LESB58), this protein is Adenylosuccinate synthetase.